The chain runs to 434 residues: Protein translocase subunit SecY (434 aa).

10 consecutive transmembrane segments (helical) span residues 19–39 (LFTL…IPGI), 73–93 (IFML…LLVY), 117–137 (YLTI…AKGI), 148–168 (YIFV…WFGE), 179–199 (TSLI…FNLF), 209–229 (VNPV…ILII), 264–284 (VLPV…LSGF), 300–320 (PNGF…TYFY), 362–382 (FSGS…QNIF), and 391–411 (IMGG…LIHI).

Belongs to the SecY/SEC61-alpha family. Component of the Sec protein translocase complex. Heterotrimer consisting of SecY, SecE and SecG subunits. The heterotrimers can form oligomers, although 1 heterotrimer is thought to be able to translocate proteins. Interacts with the ribosome. Interacts with SecDF, and other proteins may be involved. Interacts with SecA.

The protein localises to the cell inner membrane. Functionally, the central subunit of the protein translocation channel SecYEG. Consists of two halves formed by TMs 1-5 and 6-10. These two domains form a lateral gate at the front which open onto the bilayer between TMs 2 and 7, and are clamped together by SecE at the back. The channel is closed by both a pore ring composed of hydrophobic SecY resides and a short helix (helix 2A) on the extracellular side of the membrane which forms a plug. The plug probably moves laterally to allow the channel to open. The ring and the pore may move independently. This is Protein translocase subunit SecY from Borreliella burgdorferi (strain ATCC 35210 / DSM 4680 / CIP 102532 / B31) (Borrelia burgdorferi).